Reading from the N-terminus, the 156-residue chain is Snaclec A14 (156 aa).

The signal sequence occupies residues 1-23 (MGRFIFVRVGLLVVFLSLSGTGA). Disulfide bonds link cysteine 27-cysteine 38, cysteine 55-cysteine 152, and cysteine 127-cysteine 144. Residues 34–153 (YDQHCYKAFD…CGDDYPFVCK (120 aa)) enclose the C-type lectin domain. Asparagine 141 is a glycosylation site (N-linked (GlcNAc...) asparagine).

The protein belongs to the snaclec family. In terms of assembly, heterodimer; disulfide-linked. As to expression, expressed by the venom gland.

The protein resides in the secreted. Functionally, interferes with one step of hemostasis (modulation of platelet aggregation, or coagulation cascade, for example). This is Snaclec A14 from Macrovipera lebetinus (Levantine viper).